A 308-amino-acid chain; its full sequence is N-acetylgalactosamine kinase AgaK (308 aa).

Residues 4-11 and 132-139 contribute to the ATP site; these read GLDIGGTK and GTGGGLCI. Zn(2+) contacts are provided by His-156, Cys-174, Cys-176, and Cys-181.

It belongs to the ROK (NagC/XylR) family.

It localises to the cytoplasm. The enzyme catalyses N-acetyl-D-galactosamine + ATP = N-acetyl-D-galactosamine 6-phosphate + ADP + H(+). It carries out the reaction N-acetyl-D-glucosamine + ATP = N-acetyl-D-glucosamine 6-phosphate + ADP + H(+). In terms of biological role, involved in the pathway of N-acetyl-D-galactosamine degradation. Catalyzes the phosphorylation of N-acetyl-D-galactosamine (GalNAc) to yield D-galactosamine 6-phosphate (GalN-6-P). It can also phosphorylate N-acetylglucosamine (GlcNAc). This Shewanella sp. (strain ANA-3) protein is N-acetylgalactosamine kinase AgaK.